A 394-amino-acid polypeptide reads, in one-letter code: Phosphoglycerate kinase (394 aa).

Substrate contacts are provided by residues 21 to 23 (DFN), Arg36, 59 to 62 (HMGR), Arg118, and Arg151. ATP-binding positions include Lys202, Glu324, and 350 to 353 (GGDS).

Belongs to the phosphoglycerate kinase family. In terms of assembly, monomer.

It localises to the cytoplasm. It catalyses the reaction (2R)-3-phosphoglycerate + ATP = (2R)-3-phospho-glyceroyl phosphate + ADP. It functions in the pathway carbohydrate degradation; glycolysis; pyruvate from D-glyceraldehyde 3-phosphate: step 2/5. The protein is Phosphoglycerate kinase of Exiguobacterium sibiricum (strain DSM 17290 / CCUG 55495 / CIP 109462 / JCM 13490 / 255-15).